The sequence spans 352 residues: Probable protein phosphatase 2C 56 (352 aa).

Disordered regions lie at residues 18–37 and 53–87; these read RGRR…ASRG and SSSS…ITGG. 2 stretches are compositionally biased toward low complexity: residues 23 to 37 and 53 to 75; these read AASP…ASRG and SSSS…ARTR. The PPM-type phosphatase domain occupies 96–343; sequence SWDYSSFKGR…DNITCIVLQF (248 aa). Mn(2+) is bound by residues D132, G133, D295, and D334.

It belongs to the PP2C family. Requires Mg(2+) as cofactor. It depends on Mn(2+) as a cofactor.

It carries out the reaction O-phospho-L-seryl-[protein] + H2O = L-seryl-[protein] + phosphate. The catalysed reaction is O-phospho-L-threonyl-[protein] + H2O = L-threonyl-[protein] + phosphate. The sequence is that of Probable protein phosphatase 2C 56 from Oryza sativa subsp. japonica (Rice).